We begin with the raw amino-acid sequence, 186 residues long: Ribosome-recycling factor (186 aa).

This sequence belongs to the RRF family.

Its subcellular location is the cytoplasm. Its function is as follows. Responsible for the release of ribosomes from messenger RNA at the termination of protein biosynthesis. May increase the efficiency of translation by recycling ribosomes from one round of translation to another. The sequence is that of Ribosome-recycling factor from Bartonella henselae (strain ATCC 49882 / DSM 28221 / CCUG 30454 / Houston 1) (Rochalimaea henselae).